The chain runs to 190 residues: Adenine phosphoribosyltransferase (190 aa).

The protein belongs to the purine/pyrimidine phosphoribosyltransferase family. Homodimer.

The protein localises to the cytoplasm. It catalyses the reaction AMP + diphosphate = 5-phospho-alpha-D-ribose 1-diphosphate + adenine. It participates in purine metabolism; AMP biosynthesis via salvage pathway; AMP from adenine: step 1/1. Its function is as follows. Catalyzes a salvage reaction resulting in the formation of AMP, that is energically less costly than de novo synthesis. This is Adenine phosphoribosyltransferase from Cupriavidus pinatubonensis (strain JMP 134 / LMG 1197) (Cupriavidus necator (strain JMP 134)).